Reading from the N-terminus, the 586-residue chain is Aspartate--tRNA(Asp/Asn) ligase (586 aa).

Glu176 contacts L-aspartate. The segment at 200–203 is aspartate; sequence QIFK. Arg222 contacts L-aspartate. Residues 222 to 224 and Gln231 contribute to the ATP site; that span reads RDE. His449 contributes to the L-aspartate binding site. Glu483 lines the ATP pocket. Arg490 lines the L-aspartate pocket. 535-538 contacts ATP; it reads GIDR.

The protein belongs to the class-II aminoacyl-tRNA synthetase family. Type 1 subfamily. As to quaternary structure, homodimer.

The protein localises to the cytoplasm. The enzyme catalyses tRNA(Asx) + L-aspartate + ATP = L-aspartyl-tRNA(Asx) + AMP + diphosphate. In terms of biological role, aspartyl-tRNA synthetase with relaxed tRNA specificity since it is able to aspartylate not only its cognate tRNA(Asp) but also tRNA(Asn). Reaction proceeds in two steps: L-aspartate is first activated by ATP to form Asp-AMP and then transferred to the acceptor end of tRNA(Asp/Asn). In Brachyspira hyodysenteriae (strain ATCC 49526 / WA1), this protein is Aspartate--tRNA(Asp/Asn) ligase.